We begin with the raw amino-acid sequence, 132 residues long: Fatty acid-binding protein 12 (132 aa).

A fatty acid-binding positions include arginine 107 and 127–129 (RTY).

The protein belongs to the calycin superfamily. Fatty-acid binding protein (FABP) family. In terms of tissue distribution, highly expressed in adult retina and testis with lower levels in cerebral cortex, kidney and epididymis. In the retina, strongly expressed in the ganglion cell layer and throughout the inner nuclear layer in amacrine and bipolar cells. Not expressed in the outer nuclear layer. In the testis, detected in the seminiferous tubules.

May play a role in lipid transport. This Rattus norvegicus (Rat) protein is Fatty acid-binding protein 12.